Reading from the N-terminus, the 95-residue chain is uncharacterized protein (95 aa).

The protein belongs to the inositol monophosphatase superfamily.

This is an uncharacterized protein from Rhizobium leguminosarum bv. phaseoli.